The chain runs to 91 residues: PqqA binding protein (91 aa).

The protein belongs to the PqqD family. As to quaternary structure, monomer. Interacts with PqqE.

Its pathway is cofactor biosynthesis; pyrroloquinoline quinone biosynthesis. In terms of biological role, functions as a PqqA binding protein and presents PqqA to PqqE, in the pyrroloquinoline quinone (PQQ) biosynthetic pathway. This chain is PqqA binding protein, found in Pseudomonas fluorescens (strain SBW25).